A 1072-amino-acid polypeptide reads, in one-letter code: Zn(2)-C6 fungal-type transcription factor FTF2 (1072 aa).

Positions 179–206 form a DNA-binding region, zn(2)-C6 fungal-type; sequence CIACRRKKIRCSGEKPACKHCLRSRIPC.

The protein resides in the nucleus. Its function is as follows. Zn(2)-C6 fungal-type transcription factor that has a role in conidia production and also in plant colonization. Acts as a negative regulator of the production of macroconidia and is required for full virulence and the positive regulation of SIX effectors. In addition, FTF2 is also involved in the regulation of class II hydrophobins FOXG_02746 and FOXG_02748 likely required for plant colonization. In Fusarium oxysporum f. sp. lycopersici (strain 4287 / CBS 123668 / FGSC 9935 / NRRL 34936) (Fusarium vascular wilt of tomato), this protein is Zn(2)-C6 fungal-type transcription factor FTF2.